We begin with the raw amino-acid sequence, 484 residues long: Trigger factor (484 aa).

The 82-residue stretch at 162 to 243 folds into the PPIase FKBP-type domain; sequence GDFISIDLSA…VKSVKERELP (82 aa). Residues 427 to 484 form a disordered region; the sequence is DGNTIDTSEFFGKPPENDVTDLLDDDADGDAGVDADGDTENSAEPADADSADTAQGAG. Acidic residues predominate over residues 444-476; sequence DVTDLLDDDADGDAGVDADGDTENSAEPADADS.

This sequence belongs to the FKBP-type PPIase family. Tig subfamily.

The protein localises to the cytoplasm. The enzyme catalyses [protein]-peptidylproline (omega=180) = [protein]-peptidylproline (omega=0). In terms of biological role, involved in protein export. Acts as a chaperone by maintaining the newly synthesized protein in an open conformation. Functions as a peptidyl-prolyl cis-trans isomerase. This is Trigger factor from Mycobacterium ulcerans (strain Agy99).